Consider the following 201-residue polypeptide: Lipopolysaccharide core heptose(II)-phosphate phosphatase (201 aa).

An N-terminal signal peptide occupies residues 1-35; it reads MLAFTLRFIKNKRYFAILAGALVIIAGLTSQHAWS.

The protein belongs to the phosphoglycerate mutase family. Ais subfamily.

The protein localises to the periplasm. The protein operates within bacterial outer membrane biogenesis; lipopolysaccharide metabolism. Catalyzes the dephosphorylation of heptose(II) of the outer membrane lipopolysaccharide core. In Salmonella enteritidis PT4 (strain P125109), this protein is Lipopolysaccharide core heptose(II)-phosphate phosphatase.